A 380-amino-acid polypeptide reads, in one-letter code: Cystathionine gamma-synthase (380 aa).

K195 is modified (N6-(pyridoxal phosphate)lysine).

It belongs to the trans-sulfuration enzymes family. As to quaternary structure, homotetramer. Pyridoxal 5'-phosphate serves as cofactor.

The protein resides in the cytoplasm. It catalyses the reaction O-succinyl-L-homoserine + L-cysteine = L,L-cystathionine + succinate + H(+). It functions in the pathway amino-acid biosynthesis; L-methionine biosynthesis via de novo pathway; L-cystathionine from O-succinyl-L-homoserine: step 1/1. Its activity is regulated as follows. Four natural products, alpha-lapachone, 9-hydroxy-alpha-lapachone, Paulownin, and Yangambin, show strong inhibitory activities against CGS. All these four inhibitors prevent the binding of OSHS to CGS in a non-competitive fashion. These compounds are specific inhibitors against CGS from H.pylori relative to E.coli since they exhibit very low inhibition activities against CGS from E.coli. Functionally, catalyzes the formation of L-cystathionine from O-succinyl-L-homoserine (OSHS) and L-cysteine, via a gamma-replacement reaction. In the absence of thiol, catalyzes gamma-elimination to form 2-oxobutanoate, succinate and ammonia. The protein is Cystathionine gamma-synthase (metB) of Helicobacter pylori (Campylobacter pylori).